The chain runs to 343 residues: MVDKRQLLGMTLEELKGVASEVGLPAYAAKQMADWIYKKKITRISEMTNIAVAKRALLEDSFEIGAYPPSEYQKSKDGTIKYLYAAGPGRFVESVYIPTDDRATLCVSSQVGCKMNCLFCMTGKQGFTANLTANQILNQIQSLPENDSLTNIVFMGMGEPLDNVDELFKVLEILTAPYGYAWSPKRITVSTIGVTKGLKRFLEESECHLAVSLHSPYPMERLSLMPVEKAFPAREVIDLIKQYDFSHQRRVSFEYIVFKNLNDSLKHAEALSCLLGGIPCRVNLIRFHAIPNVSLETSDIAKMEAFRDFLNAKGVVCTIRASRGEDIFAACGMLSTAKNVTFV.

The active-site Proton acceptor is Glu93. The Radical SAM core domain occupies 99–320; the sequence is TDDRATLCVS…NAKGVVCTIR (222 aa). Residues Cys106 and Cys331 are joined by a disulfide bond. [4Fe-4S] cluster is bound by residues Cys113, Cys117, and Cys120. Residues 158-159, Ser190, 212-214, and His288 each bind S-adenosyl-L-methionine; these read GE and SLH. Cys331 acts as the S-methylcysteine intermediate in catalysis.

This sequence belongs to the radical SAM superfamily. RlmN family. It depends on [4Fe-4S] cluster as a cofactor.

Its subcellular location is the cytoplasm. The catalysed reaction is adenosine(2503) in 23S rRNA + 2 reduced [2Fe-2S]-[ferredoxin] + 2 S-adenosyl-L-methionine = 2-methyladenosine(2503) in 23S rRNA + 5'-deoxyadenosine + L-methionine + 2 oxidized [2Fe-2S]-[ferredoxin] + S-adenosyl-L-homocysteine. It catalyses the reaction adenosine(37) in tRNA + 2 reduced [2Fe-2S]-[ferredoxin] + 2 S-adenosyl-L-methionine = 2-methyladenosine(37) in tRNA + 5'-deoxyadenosine + L-methionine + 2 oxidized [2Fe-2S]-[ferredoxin] + S-adenosyl-L-homocysteine. Specifically methylates position 2 of adenine 2503 in 23S rRNA and position 2 of adenine 37 in tRNAs. This Parabacteroides distasonis (strain ATCC 8503 / DSM 20701 / CIP 104284 / JCM 5825 / NCTC 11152) protein is Probable dual-specificity RNA methyltransferase RlmN.